The chain runs to 66 residues: Putative alpha-neurotoxin RjAa16 (66 aa).

The LCN-type CS-alpha/beta domain occupies 1–60 (KEGYPVDWGNCKYECMSDAYCKDLCVDRKAKSGYCYKLNWFCYCEGLPDDSPIKTNGHCR). 4 cysteine pairs are disulfide-bonded: Cys-11–Cys-59, Cys-15–Cys-35, Cys-21–Cys-42, and Cys-25–Cys-44.

Belongs to the long (4 C-C) scorpion toxin superfamily. Sodium channel inhibitor family. Alpha subfamily. In terms of tissue distribution, expressed by the venom gland.

Its subcellular location is the secreted. Its function is as follows. Alpha toxins bind voltage-independently at site-3 of sodium channels (Nav) and inhibits the inactivation of the activated channels, thereby blocking neuronal transmission. The chain is Putative alpha-neurotoxin RjAa16 from Rhopalurus junceus (Caribbean blue scorpion).